A 307-amino-acid chain; its full sequence is Small ribosomal subunit biogenesis GTPase RsgA (307 aa).

The 158-residue stretch at 80 to 237 (KVDLRQAIVS…IVDTPGIKEF (158 aa)) folds into the CP-type G domain. Residues 129 to 132 (NKID) and 180 to 188 (GQSGVGKSS) each bind GTP. The Zn(2+) site is built by Cys261, Cys266, His268, and Cys274.

Belongs to the TRAFAC class YlqF/YawG GTPase family. RsgA subfamily. As to quaternary structure, monomer. Associates with 30S ribosomal subunit, binds 16S rRNA. Requires Zn(2+) as cofactor.

The protein localises to the cytoplasm. One of several proteins that assist in the late maturation steps of the functional core of the 30S ribosomal subunit. Helps release RbfA from mature subunits. May play a role in the assembly of ribosomal proteins into the subunit. Circularly permuted GTPase that catalyzes slow GTP hydrolysis, GTPase activity is stimulated by the 30S ribosomal subunit. The polypeptide is Small ribosomal subunit biogenesis GTPase RsgA (Borrelia garinii subsp. bavariensis (strain ATCC BAA-2496 / DSM 23469 / PBi) (Borreliella bavariensis)).